The chain runs to 297 residues: Homoserine kinase (297 aa).

Proline 82–serine 92 lines the ATP pocket.

The protein belongs to the GHMP kinase family. Homoserine kinase subfamily.

Its subcellular location is the cytoplasm. The enzyme catalyses L-homoserine + ATP = O-phospho-L-homoserine + ADP + H(+). Its pathway is amino-acid biosynthesis; L-threonine biosynthesis; L-threonine from L-aspartate: step 4/5. In terms of biological role, catalyzes the ATP-dependent phosphorylation of L-homoserine to L-homoserine phosphate. This Bacillus thuringiensis subsp. konkukian (strain 97-27) protein is Homoserine kinase.